The sequence spans 934 residues: DNA topoisomerase 1 (934 aa).

Residues 1 to 20 (MADPKTKGRGSGGNGSGRRL) form a disordered region. Residues 18–142 (RRLVIVESPT…VKRMVFHEIT (125 aa)) form the Toprim domain. The Mg(2+) site is built by Glu-24 and Asp-111. Residues 157 to 616 (DIDLVDAQET…FYFGGDHGVP (460 aa)) enclose the Topo IA-type catalytic domain. Positions 191–196 (SAGRVQ) are interaction with DNA. The O-(5'-phospho-DNA)-tyrosine intermediate role is filled by Tyr-342. 3 disordered regions span residues 746–765 (AAQG…RTGS), 842–892 (KRRG…KGDD), and 905–934 (LADR…AKRD). Basic residues predominate over residues 911–934 (RGPAKRPARKAARKVPAKKAAKRD).

The protein belongs to the type IA topoisomerase family. As to quaternary structure, monomer. Mg(2+) serves as cofactor.

It catalyses the reaction ATP-independent breakage of single-stranded DNA, followed by passage and rejoining.. Functionally, releases the supercoiling and torsional tension of DNA, which is introduced during the DNA replication and transcription, by transiently cleaving and rejoining one strand of the DNA duplex. Introduces a single-strand break via transesterification at a target site in duplex DNA. The scissile phosphodiester is attacked by the catalytic tyrosine of the enzyme, resulting in the formation of a DNA-(5'-phosphotyrosyl)-enzyme intermediate and the expulsion of a 3'-OH DNA strand. The free DNA strand then undergoes passage around the unbroken strand, thus removing DNA supercoils. Finally, in the religation step, the DNA 3'-OH attacks the covalent intermediate to expel the active-site tyrosine and restore the DNA phosphodiester backbone. In Mycobacterium bovis (strain ATCC BAA-935 / AF2122/97), this protein is DNA topoisomerase 1.